A 228-amino-acid chain; its full sequence is MLLHIKQVLTSEELREARGILADAPWGDGRITAGSQSAHAKNNEQLREDCEETRALQQLLLRGLERHQLFFSAALPKQISPPLFNRYGGASNSFGNHVDSAVRFLRDGSGRVRTDISCTLFLAGPDEYDGGELVIEDTFGVQRVKLPAGDMVLYPGTSVHRVLPVTRGYRTASYFWIQSMVRSDEQRRLLFEMDNHLRHLRSQYGETDSGVIGLTSTYHNLLRMWLDV.

The Fe2OG dioxygenase domain occupies 78 to 179 (QISPPLFNRY…RTASYFWIQS (102 aa)). 3 residues coordinate Fe cation: H97, D99, and H160. R170 serves as a coordination point for 2-oxoglutarate.

Requires Fe(2+) as cofactor. The cofactor is L-ascorbate.

This chain is PKHD-type hydroxylase Vapar_1809, found in Variovorax paradoxus (strain S110).